An 879-amino-acid chain; its full sequence is Band 4.1-like protein 1 (879 aa).

The interval 1-88 is disordered; the sequence is MTTETGPDSE…TPSKAQKSPQ (88 aa). The segment covering 17 to 35 has biased composition (low complexity); the sequence is ETPQQPEAAAAVTTPVTPA. Thr-30 carries the post-translational modification Phosphothreonine. Basic and acidic residues predominate over residues 38 to 50; sequence SHPETNSNEKHLT. Ser-75 carries the post-translational modification Phosphoserine. Residues 76-87 are compositionally biased toward polar residues; it reads ERTTPSKAQKSP. Position 79 is a phosphothreonine (Thr-79). One can recognise an FERM domain in the interval 97–378; it reads AICRVTLLDA…EHHTFFRLVS (282 aa). The residue at position 343 (Tyr-343) is a Phosphotyrosine. Residues Ser-378, Ser-430, Ser-437, Ser-461, and Ser-466 each carry the phosphoserine modification. A hydrophilic region spans residues 381-482; it reads PPPKGFLVMG…VRTPTKIKEL (102 aa). Positions 428 to 501 are disordered; the sequence is SRSLDGAEFS…HKQEFLDKPE (74 aa). Residues 444 to 501 show a composition bias toward basic and acidic residues; that stretch reads ENHDAGPEGDKREDDAESGGRRSEAEEGEVRTPTKIKELKPEQETTPRHKQEFLDKPE. Thr-475 is modified (phosphothreonine). Residues 483-541 are spectrin--actin-binding; sequence KPEQETTPRHKQEFLDKPEDVLLKHQASINELKRTLKEPNSKLIHRDRDWDRERRLPSS. Ser-510 is modified (phosphoserine). Residues 514–538 are compositionally biased toward basic and acidic residues; the sequence is LKRTLKEPNSKLIHRDRDWDRERRL. The segment at 514–594 is disordered; it reads LKRTLKEPNS…QDQERDAVFL (81 aa). Ser-540, Ser-541, Ser-544, and Ser-546 each carry phosphoserine. Thr-550 carries the phosphothreonine modification. Over residues 550-577 the composition is skewed to basic and acidic residues; it reads TPEKASERAGLREGSEEKVKPPRPRAPE. 10 positions are modified to phosphoserine: Ser-564, Ser-578, Ser-639, Ser-648, Ser-650, Ser-665, Ser-666, Ser-671, Ser-677, and Ser-684. Positions 657-696 are disordered; sequence FAQDLKGPSSQEDESGGLEDSPDRGACSTPEMPQFESVKA. Position 685 is a phosphothreonine (Thr-685). Phosphoserine is present on residues Ser-721, Ser-782, and Ser-868. Positions 743–879 are C-terminal (CTD); sequence PCITTETIST…EERDKKPQES (137 aa).

In terms of assembly, interacts with AGAP2. As to expression, highest expression in brain, also present in kidney, olfactory epithelium, retina, sensory ganglia, gastrointestinal tract (only enteric neurons) and lung.

It is found in the cytoplasm. Its subcellular location is the cytoskeleton. May function to confer stability and plasticity to neuronal membrane via multiple interactions, including the spectrin-actin-based cytoskeleton, integral membrane channels and membrane-associated guanylate kinases. The polypeptide is Band 4.1-like protein 1 (Mus musculus (Mouse)).